The sequence spans 314 residues: SERTA domain-containing protein 2 (314 aa).

Residues 33–80 enclose the SERTA domain; it reads YTLQRQTIFNISLMKLYNHRPLTEPSLQKTVLINNMLRRIQEELKQEG. Disordered regions lie at residues 77-119 and 181-222; these read KQEG…HPCD and PTST…SKLM. Positions 87–97 are enriched in polar residues; it reads TPSSQPTTEPS. Residues 182–193 show a composition bias toward low complexity; that stretch reads TSTSTEAATAAT. Positions 210 to 221 are enriched in basic and acidic residues; that stretch reads GPQESRADDSKL. Residues 235-311 are required for transactivation activity; sequence TGFLTDLTLD…TELDHIMEVL (77 aa). A Nuclear export signal (NES) motif is present at residues 238 to 243; sequence LTDLTL.

In terms of assembly, interacts with XPO1; which mediates nuclear export. Interacts with TFDP1; modulates transactivation activity of TFDP1/E2F complexes. Post-translationally, polyubiquitinated, which promotes proteasomal degradation. Expressed in adipose tissue.

The protein localises to the nucleus. The protein resides in the cytoplasm. Functionally, acts at E2F-responsive promoters as coregulator to integrate signals provided by PHD- and/or bromodomain-containing transcription factors. May act as coactivator as well as corepressor of E2F1-TFDP1 and E2F4-TFDP1 complexes on E2F consensus binding sites, which would activate or inhibit E2F-target genes expression. Modulates fat storage by down-regulating the expression of key genes involved in adipocyte lipolysis, thermogenesis and oxidative metabolism. The sequence is that of SERTA domain-containing protein 2 (SERTAD2) from Homo sapiens (Human).